We begin with the raw amino-acid sequence, 391 residues long: Chorismate synthase (391 aa).

R48 is an NADP(+) binding site. Residues 126 to 128 (RSS), G287, 302 to 306 (KPTSS), and R329 each bind FMN.

Belongs to the chorismate synthase family. FMNH2 serves as cofactor.

It carries out the reaction 5-O-(1-carboxyvinyl)-3-phosphoshikimate = chorismate + phosphate. It participates in metabolic intermediate biosynthesis; chorismate biosynthesis; chorismate from D-erythrose 4-phosphate and phosphoenolpyruvate: step 7/7. In terms of biological role, catalyzes the anti-1,4-elimination of the C-3 phosphate and the C-6 proR hydrogen from 5-enolpyruvylshikimate-3-phosphate (EPSP) to yield chorismate, which is the branch point compound that serves as the starting substrate for the three terminal pathways of aromatic amino acid biosynthesis. This reaction introduces a second double bond into the aromatic ring system. The sequence is that of Chorismate synthase from Sulfolobus acidocaldarius (strain ATCC 33909 / DSM 639 / JCM 8929 / NBRC 15157 / NCIMB 11770).